Reading from the N-terminus, the 98-residue chain is Hainantoxin-XVII.2 (98 aa).

A signal peptide spans Met-1 to Ala-40. A propeptide spanning residues Gln-41–Arg-64 is cleaved from the precursor. 3 cysteine pairs are disulfide-bonded: Cys-66–Cys-81, Cys-73–Cys-85, and Cys-80–Cys-95.

It belongs to the hainantoxin family. 17 subfamily. As to expression, expressed by the venom gland.

It localises to the secreted. Functionally, putative ion channel inhibitor. The protein is Hainantoxin-XVII.2 of Cyriopagopus hainanus (Chinese bird spider).